The chain runs to 1533 residues: Actin cytoskeleton-regulatory complex protein pan-1 (1533 aa).

Positions 1–204 are disordered; the sequence is MYSNSNAFLG…PPPPVKPQAT (204 aa). Low complexity-rich tracts occupy residues 19 to 46, 53 to 136, 143 to 170, and 177 to 193; these read QQPQ…QPTG, GFAP…FQTG, IPQQ…QPQP, and QIQA…QGGI. The EH 1 domain occupies 244–333; it reads DQARFETLFK…DHIKNEVSSM (90 aa). The EF-hand 1 domain occupies 277–312; that stretch reads LDGDSLSQIWTLADTTRSGQLHFPEFALAMYLCNLK. The segment covering 345–359 has biased composition (low complexity); that stretch reads AGSSSAPASNAPSFA. 2 disordered regions span residues 345–378 and 393–423; these read AGSS…PQPS and QQTG…GYAG. Polar residues-rich tracts occupy residues 360–378 and 393–410; these read TQQN…PQPS and QQTG…QQTG. Residues 513-602 enclose the EH 2 domain; the sequence is EKTRYDALFR…PELVPPSARN (90 aa). Residues 546–581 form the EF-hand 2 domain; sequence LDKPDLERIWTLADNGNKGRLDLDEFAVAMHLIYRK. A compositionally biased stretch (basic and acidic residues) spans 649–664; that stretch reads NRKDATVFKNNDEEVG. 4 disordered regions span residues 649 to 691, 894 to 917, 935 to 1306, and 1334 to 1533; these read NRKD…GDDL, IEDS…WEDA, SRAA…STNP, and DAIS…RVLD. The stretch at 690–890 forms a coiled coil; that stretch reads DLTIEQLRKK…RDVEDSVREF (201 aa). Basic and acidic residues-rich tracts occupy residues 894–916 and 935–947; these read IEDS…RWED and SRAA…DRQG. A compositionally biased stretch (low complexity) spans 968-982; it reads TPSPSISRTSTPAST. Positions 1026-1209 form a coiled coil; the sequence is ETAAQRAERE…KQLEAIDDED (184 aa). Composition is skewed to basic and acidic residues over residues 1031–1063, 1090–1164, and 1173–1203; these read RAER…KLAE, GKAD…EEEK, and EAKE…KQLE. The span at 1204–1218 shows a compositional bias: acidic residues; sequence AIDDEDSSSSDEEGP. Positions 1221-1237 are enriched in polar residues; it reads ITPQASTPTVGGSQVGT. The segment covering 1279 to 1293 has biased composition (low complexity); the sequence is SQSSEASTSSVAAPV. Acidic residues predominate over residues 1348-1367; that stretch reads DDDDDDWGSEKGSDDEDSDD. Over residues 1412-1495 the composition is skewed to pro residues; that stretch reads SSPPPPPAPV…PPPGGAPAPS (84 aa). Positions 1500–1517 constitute a WH2 domain; sequence RPAGLLGEIQAGRALKKT.

The protein belongs to the PAN1 family. Component of the PAN1 actin cytoskeleton-regulatory complex.

It localises to the cell membrane. The protein resides in the endosome membrane. Its subcellular location is the cytoplasm. The protein localises to the cytoskeleton. It is found in the actin patch. Functionally, component of the PAN1 actin cytoskeleton-regulatory complex required for the internalization of endosomes during actin-coupled endocytosis. The complex links the site of endocytosis to the cell membrane-associated actin cytoskeleton. Mediates uptake of external molecules and vacuolar degradation of plasma membrane proteins. Plays a role in the proper organization of the cell membrane-associated actin cytoskeleton and promotes its destabilization. This chain is Actin cytoskeleton-regulatory complex protein pan-1 (pan-1), found in Neurospora crassa (strain ATCC 24698 / 74-OR23-1A / CBS 708.71 / DSM 1257 / FGSC 987).